We begin with the raw amino-acid sequence, 92 residues long: Small ribosomal subunit protein uS19 (92 aa).

Belongs to the universal ribosomal protein uS19 family.

In terms of biological role, protein S19 forms a complex with S13 that binds strongly to the 16S ribosomal RNA. The chain is Small ribosomal subunit protein uS19 from Magnetococcus marinus (strain ATCC BAA-1437 / JCM 17883 / MC-1).